The chain runs to 363 residues: 3-isopropylmalate dehydrogenase (363 aa).

78 to 91 (GPKWENLPPESQPE) contributes to the NAD(+) binding site. 4 residues coordinate substrate: Arg-99, Arg-109, Arg-138, and Asp-227. Mg(2+) contacts are provided by Asp-227, Asp-251, and Asp-255. Position 285 to 297 (285 to 297 (GSAPDIAGKNIAN)) interacts with NAD(+).

Belongs to the isocitrate and isopropylmalate dehydrogenases family. LeuB type 1 subfamily. As to quaternary structure, homodimer. Mg(2+) serves as cofactor. It depends on Mn(2+) as a cofactor.

It is found in the cytoplasm. The catalysed reaction is (2R,3S)-3-isopropylmalate + NAD(+) = 4-methyl-2-oxopentanoate + CO2 + NADH. Its pathway is amino-acid biosynthesis; L-leucine biosynthesis; L-leucine from 3-methyl-2-oxobutanoate: step 3/4. Its function is as follows. Catalyzes the oxidation of 3-carboxy-2-hydroxy-4-methylpentanoate (3-isopropylmalate) to 3-carboxy-4-methyl-2-oxopentanoate. The product decarboxylates to 4-methyl-2 oxopentanoate. This is 3-isopropylmalate dehydrogenase from Salmonella paratyphi A (strain ATCC 9150 / SARB42).